The chain runs to 578 residues: Serine/threonine-protein kinase D6PKL3 (578 aa).

Positions 1–24 (MDSSSSVVYVGSSSKSRNFQSKSK) are enriched in low complexity. The disordered stretch occupies residues 1–64 (MDSSSSVVYV…EVIESSVSSV (64 aa)). Residues 25–34 (GSITSFSIDS) are compositionally biased toward polar residues. The span at 53–64 (SPEVIESSVSSV) shows a compositional bias: low complexity. The 335-residue stretch at 182-516 (FKLIKKLGGG…ATEIKQHPFF (335 aa)) folds into the Protein kinase domain. ATP is bound by residues 188-196 (LGGGDIGNV) and K211. Residue D307 is the Proton acceptor of the active site. Positions 325–426 (DFDLSLRCAV…VGTHEYLAPE (102 aa)) are activation loop. The PIF signature appears at 575-578 (IDFF).

Belongs to the protein kinase superfamily. AGC Ser/Thr protein kinase family. In terms of tissue distribution, expressed predominantly in root tissue with lower levels found in leaf, stem, seed and flower.

The protein resides in the cell membrane. It catalyses the reaction L-seryl-[protein] + ATP = O-phospho-L-seryl-[protein] + ADP + H(+). It carries out the reaction L-threonyl-[protein] + ATP = O-phospho-L-threonyl-[protein] + ADP + H(+). Protein kinase that regulates the auxin transport activity of PIN auxin efflux facilitators by direct phosphorylation. D6PK-mediated PIN phosphorylation promotes auxin transport in the hypocotyl and this is a prerequisite for PHOT1-dependent hypocotyl bending. The sequence is that of Serine/threonine-protein kinase D6PKL3 (D6PKL3) from Arabidopsis thaliana (Mouse-ear cress).